Here is a 393-residue protein sequence, read N- to C-terminus: Cysteine protease ATG4B (393 aa).

Methionine 1 is modified (N-acetylmethionine). Serine 34 carries the post-translational modification Phosphoserine; by PKB/AKT1 and PKB/AKT2. Catalysis depends on cysteine 74, which acts as the Nucleophile. Cysteine 189 carries the post-translational modification S-nitrosocysteine. Active-site residues include aspartate 278 and histidine 280. An S-nitrosocysteine mark is found at cysteine 292 and cysteine 301. Cysteines 292 and 361 form a disulfide. Serine 316 is subject to Phosphoserine; by ULK1. Residue serine 383 is modified to Phosphoserine; by STK26. The LIR signature appears at phenylalanine 388–leucine 391. Serine 392 carries the post-translational modification Phosphoserine.

Belongs to the peptidase C54 family. In terms of assembly, interacts with PFKP; promoting phosphorylation of ATG4B at Ser-34. Interacts with GBP7. Phosphorylation at Ser-383 and Ser-392 promotes autophagy by increasing protein delipidation activity without affecting proteolytic activation of ATG8 proteins. Phosphorylation at Ser-316 by ULK1 inhibits autophagy by decreasing both proteolytic activation and delipidation activities. Phosphorylation at Ser-316 is dephosphorylated by protein phosphatase 2A (PP2A). Phosphorylation at Ser-34 by AKT2 promotes its hydrolase activity, leading to increased proteolytic activation and delipidation of ATG8 family proteins. Phosphorylation at Ser-34 by AKT1 promotes mitochondrial localization and inhibition of the F1F0-ATP synthase activity, leading to elevation of mitochondrial reactive oxygen species (ROS). In terms of processing, ubiquitinated by RNF5, leading to its degradation by the proteasome. Post-translationally, S-nitrosylation at Cys-189 and Cys-292 in response to high glucose decreases both proteolytic activation and delipidation activities. O-glycosylated by OGT, leading to increase protease activity, thereby promoting the proteolytic activation of ATG8 family proteins. In terms of processing, forms reversible intrachain disulfide bonds in response to oxidative stress. Forms interchain disulfide bonds, leading to formation of homooligomers in response to oxidation.

Its subcellular location is the cytoplasm. It is found in the cytosol. It localises to the cytoplasmic vesicle. The protein resides in the autophagosome. The protein localises to the endoplasmic reticulum. Its subcellular location is the mitochondrion. The enzyme catalyses [protein]-C-terminal L-amino acid-glycyl-phosphatidylethanolamide + H2O = [protein]-C-terminal L-amino acid-glycine + a 1,2-diacyl-sn-glycero-3-phosphoethanolamine. It carries out the reaction [protein]-C-terminal L-amino acid-glycyl-phosphatidylserine + H2O = [protein]-C-terminal L-amino acid-glycine + a 1,2-diacyl-sn-glycero-3-phospho-L-serine. With respect to regulation, inhibited by N-ethylmaleimide. Redox-regulated during autophagy since reducing conditions activate ATG4A whereas an oxidizing environment such as the presence of H(2)O(2) inhibits its activity. The cysteine protease activity compounds is inhibited by styrylquinoline compounds 4-28 and LV-320. Its function is as follows. Cysteine protease that plays a key role in autophagy by mediating both proteolytic activation and delipidation of ATG8 family proteins. Required for canonical autophagy (macroautophagy), non-canonical autophagy as well as for mitophagy. The protease activity is required for proteolytic activation of ATG8 family proteins: cleaves the C-terminal amino acid of ATG8 proteins MAP1LC3A, MAP1LC3B, MAP1LC3C, GABARAPL1, GABARAPL2 and GABARAP, to reveal a C-terminal glycine. Exposure of the glycine at the C-terminus is essential for ATG8 proteins conjugation to phosphatidylethanolamine (PE) and insertion to membranes, which is necessary for autophagy. Protease activity is also required to counteract formation of high-molecular weight conjugates of ATG8 proteins (ATG8ylation): acts as a deubiquitinating-like enzyme that removes ATG8 conjugated to other proteins, such as ATG3. In addition to the protease activity, also mediates delipidation of ATG8 family proteins. Catalyzes delipidation of PE-conjugated forms of ATG8 proteins during macroautophagy. Also involved in non-canonical autophagy, a parallel pathway involving conjugation of ATG8 proteins to single membranes at endolysosomal compartments, by catalyzing delipidation of ATG8 proteins conjugated to phosphatidylserine (PS). Compared to other members of the family (ATG4A, ATG4C or ATG4C), constitutes the major protein for proteolytic activation of ATG8 proteins, while it displays weaker delipidation activity than other ATG4 paralogs. Involved in phagophore growth during mitophagy independently of its protease activity and of ATG8 proteins: acts by regulating ATG9A trafficking to mitochondria and promoting phagophore-endoplasmic reticulum contacts during the lipid transfer phase of mitophagy. This chain is Cysteine protease ATG4B, found in Homo sapiens (Human).